We begin with the raw amino-acid sequence, 260 residues long: (R)-2-hydroxyglutaryl-CoA dehydratase activating ATPase (260 aa).

12 to 16 (STASK) contributes to the ATP binding site. The [4Fe-4S] cluster site is built by Cys127 and Cys166. ATP is bound by residues Gln220 and Gln243.

This sequence belongs to the HgdC family. In terms of assembly, homodimer. The cofactor is [4Fe-4S] cluster. Mg(2+) is required as a cofactor.

The catalysed reaction is ATP + H2O = ADP + phosphate + H(+). It functions in the pathway amino-acid degradation; L-glutamate degradation via hydroxyglutarate pathway; crotonoyl-CoA from L-glutamate: step 4/5. Inactivated by exposure to air within less than 15 minutes. Its function is as follows. Involved in the fermentation of L-glutamate via the hydroxyglutarate pathway. HgdC (CompA) has a very low ATPase activity, whose the role is to activate dehydratase HgdA-HgdB complex and then maintain an appropriate redox state via an ATP-dependent electron transfer. The dehydratase requires only catalytic amounts of ATP and substoichiometric amounts of HgdC (CompA) to be functional. This Acidaminococcus fermentans (strain ATCC 25085 / DSM 20731 / CCUG 9996 / CIP 106432 / VR4) protein is (R)-2-hydroxyglutaryl-CoA dehydratase activating ATPase.